Reading from the N-terminus, the 309-residue chain is Methionyl-tRNA formyltransferase (309 aa).

A (6S)-5,6,7,8-tetrahydrofolate-binding site is contributed by 109–112; it reads SLLP.

It belongs to the Fmt family.

The catalysed reaction is L-methionyl-tRNA(fMet) + (6R)-10-formyltetrahydrofolate = N-formyl-L-methionyl-tRNA(fMet) + (6S)-5,6,7,8-tetrahydrofolate + H(+). Attaches a formyl group to the free amino group of methionyl-tRNA(fMet). The formyl group appears to play a dual role in the initiator identity of N-formylmethionyl-tRNA by promoting its recognition by IF2 and preventing the misappropriation of this tRNA by the elongation apparatus. This chain is Methionyl-tRNA formyltransferase, found in Clostridioides difficile (strain 630) (Peptoclostridium difficile).